Consider the following 156-residue polypeptide: ATP synthase subunit b (156 aa).

Residues 7-29 traverse the membrane as a helical segment; it reads LFAQMVVFLVLAWFTMKFVWPPL.

Belongs to the ATPase B chain family. In terms of assembly, F-type ATPases have 2 components, F(1) - the catalytic core - and F(0) - the membrane proton channel. F(1) has five subunits: alpha(3), beta(3), gamma(1), delta(1), epsilon(1). F(0) has three main subunits: a(1), b(2) and c(10-14). The alpha and beta chains form an alternating ring which encloses part of the gamma chain. F(1) is attached to F(0) by a central stalk formed by the gamma and epsilon chains, while a peripheral stalk is formed by the delta and b chains.

The protein resides in the cell inner membrane. In terms of biological role, f(1)F(0) ATP synthase produces ATP from ADP in the presence of a proton or sodium gradient. F-type ATPases consist of two structural domains, F(1) containing the extramembraneous catalytic core and F(0) containing the membrane proton channel, linked together by a central stalk and a peripheral stalk. During catalysis, ATP synthesis in the catalytic domain of F(1) is coupled via a rotary mechanism of the central stalk subunits to proton translocation. Functionally, component of the F(0) channel, it forms part of the peripheral stalk, linking F(1) to F(0). This chain is ATP synthase subunit b, found in Burkholderia ambifaria (strain MC40-6).